The following is a 766-amino-acid chain: 5-methyltetrahydropteroyltriglutamate--homocysteine methyltransferase 1 (766 aa).

5-methyltetrahydropteroyltri-L-glutamate-binding residues include Lys-18 and Asn-116. L-homocysteine is bound by residues 438 to 440 (IGS) and Glu-491. L-methionine-binding positions include 438–440 (IGS) and Glu-491. Residues Asp-496, Tyr-519, 522–523 (RC), and Trp-568 contribute to the 5-methyltetrahydropteroyltri-L-glutamate site. L-homocysteine is bound at residue Asp-606. Asp-606 is an L-methionine binding site. Zn(2+) contacts are provided by His-648, Cys-650, His-659, and Glu-672. His-702 functions as the Proton donor in the catalytic mechanism. Residue Cys-734 participates in Zn(2+) binding.

It belongs to the vitamin-B12 independent methionine synthase family. Zn(2+) serves as cofactor.

It is found in the cytoplasm. The protein resides in the cytosol. The enzyme catalyses 5-methyltetrahydropteroyltri-L-glutamate + L-homocysteine = tetrahydropteroyltri-L-glutamate + L-methionine. It functions in the pathway amino-acid biosynthesis; L-methionine biosynthesis via de novo pathway; L-methionine from L-homocysteine (MetE route): step 1/1. Functionally, catalyzes the transfer of a methyl group from 5-methyltetrahydrofolate to homocysteine resulting in methionine formation. In Oryza sativa subsp. japonica (Rice), this protein is 5-methyltetrahydropteroyltriglutamate--homocysteine methyltransferase 1.